The sequence spans 1150 residues: ATP-dependent helicase/deoxyribonuclease subunit B (1150 aa).

An ATP-binding site is contributed by 8–15 (GRAGSGKS). Cysteine 789, cysteine 1109, cysteine 1112, and cysteine 1118 together coordinate [4Fe-4S] cluster.

Belongs to the helicase family. AddB/RexB type 1 subfamily. Heterodimer of AddA and AddB. Mg(2+) serves as cofactor. [4Fe-4S] cluster is required as a cofactor.

The heterodimer acts as both an ATP-dependent DNA helicase and an ATP-dependent, dual-direction single-stranded exonuclease. Recognizes the chi site generating a DNA molecule suitable for the initiation of homologous recombination. The AddB subunit has 5' -&gt; 3' nuclease activity but not helicase activity. The polypeptide is ATP-dependent helicase/deoxyribonuclease subunit B (Clostridium kluyveri (strain NBRC 12016)).